The chain runs to 395 residues: MVAGTRCLLALLLPQVLLGGAAGLIPELGRRKFAASSGRPSPQPSDDILSEFELRLLSMFGLKQRPTPSRDAVVPPYMLDLYRRHSGQPGAPAPDHRLERAASRANTVRSFHHEESLEELPETSGKTTRRFFFNLTSIPPEEFITSAELQVFREQMQEALGDDSGFHHRINIYEIIKPATANSKFPATRLLDTRLVNQNTSRWESFDVTPAVMRWTAQGHANHGFVVEVTHLEEKQGVSKRHVRISRSLHPDEHSWSQIRPLLVTFGHDGKGHPLHRREKRQAKHKQRKRLKSSCKRHPLYVDFSDVGWNDWIVAPPGYHAFYCHGECPFPLADHLNSTNHAIVQTLVNSVNSKIPKACCVPTELSAISMLYLDENEKVVLKNYQDMVVEGCGCR.

A signal peptide spans 1 to 23 (MVAGTRCLLALLLPQVLLGGAAG). Positions 24-281 (LIPELGRRKF…GHPLHRREKR (258 aa)) are cleaved as a propeptide — cleaved by PCSK5. S86 is subject to Phosphoserine. Residues N134 and N199 are each glycosylated (N-linked (GlcNAc...) asparagine). The segment at 270-292 (GKGHPLHRREKRQAKHKQRKRLK) is disordered. Positions 273 to 292 (HPLHRREKRQAKHKQRKRLK) are enriched in basic residues. 3 cysteine pairs are disulfide-bonded: C295/C360, C324/C392, and C328/C394. N337 carries an N-linked (GlcNAc...) asparagine glycan.

This sequence belongs to the TGF-beta family. As to quaternary structure, homodimer; disulfide-linked. Interacts with SOSTDC1. Interacts with GREM2, RGMA, RGMB and RGMC. Interacts with ASPN. Interacts with MAFP5. Interacts with FBN1 (via N-terminal domain) and FBN2. Interacts with type I receptor BMPR1A. Interacts with type II receptor BMPR2. Interacts with SCUBE3. Interacts with TNFAIP6 (primarily via Link domain); this interaction is inhibited by hyaluronan. Interacts with ERFE. Interacts with BMPR1A/ALK3; the interaction may induce HAMP expression. Forms heterodimers with BMP6 in vitro; the heterodimer then binds to its receptor BMPR1A /ALK3 and may induce HAMP expression. Interacts with TGFBR3.

Its subcellular location is the secreted. Functionally, growth factor of the TGF-beta superfamily that plays essential roles in many developmental processes, including cardiogenesis, neurogenesis, and osteogenesis. Induces cartilage and bone formation. Initiates the canonical BMP signaling cascade by associating with type I receptor BMPR1A and type II receptor BMPR2. Once all three components are bound together in a complex at the cell surface, BMPR2 phosphorylates and activates BMPR1A. In turn, BMPR1A propagates signal by phosphorylating SMAD1/5/8 that travel to the nucleus and act as activators and repressors of transcription of target genes. Also acts to promote expression of HAMP, via the interaction with its receptor BMPR1A/ALK3. Can also signal through non-canonical pathways such as ERK/MAP kinase signaling cascade that regulates osteoblast differentiation. Also stimulates the differentiation of myoblasts into osteoblasts via the EIF2AK3-EIF2A-ATF4 pathway by stimulating EIF2A phosphorylation which leads to increased expression of ATF4 which plays a central role in osteoblast differentiation. Acts as a positive regulator of odontoblast differentiation during mesenchymal tooth germ formation, expression is repressed during the bell stage by MSX1-mediated inhibition of CTNNB1 signaling. The protein is Bone morphogenetic protein 2 (BMP2) of Oryctolagus cuniculus (Rabbit).